The primary structure comprises 609 residues: Forkhead box protein O (609 aa).

2 disordered regions span residues 1–89 (MDGF…KNSS) and 181–263 (KSVR…SSCG). Threonine 43 carries the phosphothreonine; by PKB/AKT1 modification. Polar residues predominate over residues 62-79 (TKASNQQLASGDPQQAMQ). A compositionally biased stretch (low complexity) spans 80–89 (NANAAKKNSS). Positions 94 to 200 (WGNLSYADLI…ETSRYEKRRG (107 aa)) form a DNA-binding region, fork-head. Phosphoserine; by PKB/AKT1 is present on serine 189. Polar residues-rich tracts occupy residues 220–229 (ATPSPSSSVS) and 254–263 (RASSNASSCG). At serine 257 the chain carries Phosphoserine; by PKB/AKT1. Serine 260, serine 261, and serine 266 each carry phosphoserine. Disordered regions lie at residues 321-365 (AASG…QGQG) and 384-411 (RDGLSPNSVTTTMSPAYPNSEPSSDSLN). Residues 327–339 (TQPPPPYQPPQQP) are compositionally biased toward pro residues. The segment covering 388–397 (SPNSVTTTMS) has biased composition (polar residues).

Interacts with melt.

It is found in the cytoplasm. It localises to the nucleus. In terms of biological role, transcription factor involved in the regulation of the insulin signaling pathway. Consistently activates both the downstream target Thor\d4EBP and the feedback control target InR. Involved in negative regulation of the cell cycle, modulating cell growth and proliferation. In response to cellular stresses, such as nutrient deprivation or increased levels of reactive oxygen species, foxo is activated and inhibits growth through the action of target genes such as Thor. Foxo activated in the adult fat body can regulate lifespan in adults; an insulin peptide itself may function as one secondary messenger of insulin-regulated aging. Also regulates Lip4, homolog of human acid lipases, thereby acting as a key modulator of lipid metabolism by insulin signaling and integrates insulin responses to glucose and lipid homeostasis. The sequence is that of Forkhead box protein O from Drosophila virilis (Fruit fly).